A 397-amino-acid polypeptide reads, in one-letter code: 4-O-methyl-glucuronoyl methylesterase (397 aa).

The first 18 residues, 1 to 18, serve as a signal peptide directing secretion; sequence MVHLTSALLVAGAAFAAA. 3 disulfides stabilise this stretch: Cys-31-Cys-65, Cys-212-Cys-347, and Cys-244-Cys-319. The short motif at 211–216 is the GXSYXG catalytic site motif element; sequence GCSRNG. The active-site Nucleophile is Ser-213. 4 residues coordinate substrate: Lys-217, Gln-259, Glu-267, and Trp-310. The active-site Proton donor/acceptor is the His-346.

Belongs to the carbohydrate esterase 15 (CE15) family.

It localises to the secreted. The catalysed reaction is a 4-O-methyl-alpha-D-glucuronosyl ester derivative + H2O = 4-O-methyl-alpha-D-glucuronate derivative + an alcohol + H(+). Functionally, glucuronoyl esterase which may play a significant role in biomass degradation, as it is considered to disconnect hemicellulose from lignin through the hydrolysis of the ester bond between 4-O-methyl-D-glucuronic acid residues of glucuronoxylans and aromatic alcohols of lignin. The protein is 4-O-methyl-glucuronoyl methylesterase (ge2) of Thermothelomyces thermophilus (strain ATCC 42464 / BCRC 31852 / DSM 1799) (Sporotrichum thermophile).